A 343-amino-acid polypeptide reads, in one-letter code: Mediator of RNA polymerase II transcription subunit 2 (343 aa).

Disordered regions lie at residues Lys105 to Leu141 and Ser252 to Asn277. A compositionally biased stretch (basic and acidic residues) spans Gln107–Ala132. Over residues Ser252 to Asp264 the composition is skewed to polar residues.

The protein belongs to the Mediator complex subunit 2 family. Component of the Mediator complex.

The protein resides in the nucleus. Functionally, component of the Mediator complex, a coactivator involved in the regulated transcription of nearly all RNA polymerase II-dependent genes. Mediator functions as a bridge to convey information from gene-specific regulatory proteins to the basal RNA polymerase II transcription machinery. Mediator is recruited to promoters by direct interactions with regulatory proteins and serves as a scaffold for the assembly of a functional preinitiation complex with RNA polymerase II and the general transcription factors. This chain is Mediator of RNA polymerase II transcription subunit 2 (MED2), found in Eremothecium gossypii (strain ATCC 10895 / CBS 109.51 / FGSC 9923 / NRRL Y-1056) (Yeast).